Reading from the N-terminus, the 357-residue chain is Probable butyrate kinase 1 (357 aa).

This sequence belongs to the acetokinase family.

It localises to the cytoplasm. It catalyses the reaction butanoate + ATP = butanoyl phosphate + ADP. The sequence is that of Probable butyrate kinase 1 from Thermotoga maritima (strain ATCC 43589 / DSM 3109 / JCM 10099 / NBRC 100826 / MSB8).